The chain runs to 273 residues: Ribosomal RNA small subunit methyltransferase A (273 aa).

Residues Asn-18, Leu-20, Gly-45, Glu-66, Asp-91, and Asn-113 each contribute to the S-adenosyl-L-methionine site.

The protein belongs to the class I-like SAM-binding methyltransferase superfamily. rRNA adenine N(6)-methyltransferase family. RsmA subfamily.

It is found in the cytoplasm. The catalysed reaction is adenosine(1518)/adenosine(1519) in 16S rRNA + 4 S-adenosyl-L-methionine = N(6)-dimethyladenosine(1518)/N(6)-dimethyladenosine(1519) in 16S rRNA + 4 S-adenosyl-L-homocysteine + 4 H(+). In terms of biological role, specifically dimethylates two adjacent adenosines (A1518 and A1519) in the loop of a conserved hairpin near the 3'-end of 16S rRNA in the 30S particle. May play a critical role in biogenesis of 30S subunits. The chain is Ribosomal RNA small subunit methyltransferase A from Shigella boydii serotype 18 (strain CDC 3083-94 / BS512).